The chain runs to 241 residues: Uridylate kinase (241 aa).

15-18 (KLSG) is a binding site for ATP. An involved in allosteric activation by GTP region spans residues 23–28 (GAEGFG). Residue Gly57 coordinates UMP. 2 residues coordinate ATP: Gly58 and Arg62. UMP-binding positions include Asp77 and 138–145 (TGNPFFTT). Thr165, Tyr171, and Asp174 together coordinate ATP.

It belongs to the UMP kinase family. As to quaternary structure, homohexamer.

It localises to the cytoplasm. It catalyses the reaction UMP + ATP = UDP + ADP. It participates in pyrimidine metabolism; CTP biosynthesis via de novo pathway; UDP from UMP (UMPK route): step 1/1. Its activity is regulated as follows. Allosterically activated by GTP. Inhibited by UTP. Functionally, catalyzes the reversible phosphorylation of UMP to UDP. This is Uridylate kinase from Yersinia pseudotuberculosis serotype O:1b (strain IP 31758).